The chain runs to 194 residues: Cytochrome bo(3) ubiquinol oxidase subunit 3 (194 aa).

The Cytoplasmic portion of the chain corresponds to 1–18 (MKKKYKIDTNIFSKELLG). The helical transmembrane segment at 19–41 (FWLYLMSDCIIFCTLFSVYFILV) threads the bilayer. Residues 42 to 55 (DNVAQGPSGHNIFQ) lie on the Extracellular side of the membrane. The helical transmembrane segment at 56 to 78 (NNLIIIETFLLLFSSFSCNLVLF) threads the bilayer. The Cytoplasmic segment spans residues 79-84 (EMKNKN). Residues 85–107 (LYMVFLWLGITFLLGLLFVFLEL) form a helical membrane-spanning segment. The Extracellular portion of the chain corresponds to 108 to 126 (FEFFHLINLGFGPTRSGFL). A helical membrane pass occupies residues 127-149 (SSFFVLIATHGIHVISGLIWIIV). At 150 to 169 (MIKYVYTFNITNLIYYRMLC) the chain is on the cytoplasmic side. A helical transmembrane segment spans residues 170–192 (LNLFWHFLDIVWVFIFSFVYLFG). The Extracellular segment spans residues 193–194 (MV).

It belongs to the cytochrome c oxidase subunit 3 family. Heterooctamer of two A chains, two B chains, two C chains and two D chains.

It is found in the cell membrane. In terms of biological role, cytochrome bo(3) ubiquinol terminal oxidase is the component of the aerobic respiratory chain of E.coli that predominates when cells are grown at high aeration. Has proton pump activity across the membrane in addition to electron transfer, pumping 2 protons/electron. The protein is Cytochrome bo(3) ubiquinol oxidase subunit 3 (cyoC) of Buchnera aphidicola subsp. Baizongia pistaciae (strain Bp).